A 269-amino-acid polypeptide reads, in one-letter code: Gene 51 glycoprotein (269 aa).

Residues Asn-53, Asn-58, Asn-74, and Asn-78 are each glycosylated (N-linked (GlcNAc...) asparagine; by host). 2 disordered regions span residues Leu-67 to Tyr-87 and Met-103 to Asn-137. Residues Thr-76 to Tyr-87 are compositionally biased toward low complexity. Over residues Met-103 to Leu-112 the composition is skewed to polar residues. Positions Ser-113–Lys-136 are enriched in low complexity. 4 N-linked (GlcNAc...) asparagine; by host glycosylation sites follow: Asn-137, Asn-161, Asn-170, and Asn-191.

The polypeptide is Gene 51 glycoprotein (51) (Saimiriine herpesvirus 2 (strain 11) (SaHV-2)).